The following is a 149-amino-acid chain: Large ribosomal subunit protein bL9 (149 aa).

It belongs to the bacterial ribosomal protein bL9 family.

Its function is as follows. Binds to the 23S rRNA. This chain is Large ribosomal subunit protein bL9, found in Amoebophilus asiaticus (strain 5a2).